The sequence spans 907 residues: MQDKYSPQDIERAAQDDWRARDAYRVTQDAGKKKFYACSMLPYPSGKLHMGHVRNYTINDMLTRYLRMNGYNVLMPMGWDAFGLPAENAAIKNGMPPARWTRENIAYMKQQMQALGLAIDWSRELATCDPGYYKWNQWLFLKMLDKGIAYRKTQVVNWDPVDQTVLANEQVNEGKGWRTGAVVEKREIPGYYLKITDYAEELLAFVTDDRLPGWPERVKLMQENWIGKSEGLRFAFPHDVRGDDGALIGGGRLYVFTTRADTIMGVTFCAVAPEHPLASHAAKSNPALAAFIDECRSGGTTEAALATQEKKGLRTGLYVTHPLTDEPLEVWVGNYVLMGYGDGAVMGVPAHDERDFAFALKYGIEIRQVVLVDGEHFDYRRWQDWYGDKQRGVTINSDSFSGLHHKEAVQAVAHVLEQKGLGEKKTTWRLRDWGVSRQRYWGTPIPIIHCDQHGAVPVPEKDLPVVLPQDCIPDGTGNPLHSHQGFHAGVTCPVCGKSARRETDTMDTFVDSAWYFMRYCDPKNDQAMVAEGTDYWMRDPQQATGGSGMDQYIGGIEHAILHLLYARFWTKVMRDLGLVKVDEPFNRLLTQGMVLNHIYSRRNDNGGREYFWPQDVEQVHDAAGKIIGARLIRAVGDWPAGSAIDYEGMGTMSKSRNNGVDPQELIGKYGADTARLHTMFTAPPEAALEWNDAAVEGSHRFLRRVWNFGLQLHAAGMTAASASLAGAGAPQTRNPPAFGKPAKALRREIHQLLRQVDYDYQRMQYNTVVSGAMKMLNALENFKASDPASQASDPLALTEGFGILLRCLYPVTPHIAHSLWRDLGYAAAVGELLDAPWPQVDGQALVQDEIELMLQINGKLRGSILVPAQASQAAIERIARASPAALAAGAVPKRVIVVPGRLVNLVF.

The 'HIGH' region signature appears at 42-52 (PYPSGKLHMGH). The 'KMSKS' region motif lies at 651-655 (TMSKS). Lysine 654 contributes to the ATP binding site.

It belongs to the class-I aminoacyl-tRNA synthetase family.

The protein localises to the cytoplasm. It catalyses the reaction tRNA(Leu) + L-leucine + ATP = L-leucyl-tRNA(Leu) + AMP + diphosphate. This is Leucine--tRNA ligase from Verminephrobacter eiseniae (strain EF01-2).